A 265-amino-acid chain; its full sequence is ETS-related transcription factor Elf-5 (265 aa).

The region spanning 43–129 (YPAFEHQTAC…FILQNIRTQG (87 aa)) is the PNT domain. Positions 173-254 (SHLWEFVRDL…VDRRLVYKFG (82 aa)) form a DNA-binding region, ETS.

It belongs to the ETS family. Expressed exclusively in tissues with a high content of epithelial cells. Highly expressed in salivary gland, mammary gland, kidney and prostate. Weakly expressed in placenta and lung. Isoform 1 and isoform 2 are differentially expressed in different tissues. In the kidney, only isoform 1 was expressed, while prostate expressed both isoforms, with levels of isoform 2 being higher. Expression is up-regulated during keratinocyte differentiation. Several epithelial carcinoma cell lines showed lack of expression.

The protein resides in the nucleus. Transcriptionally activator that may play a role in regulating the later stages of keratinocytes terminal differentiation. Its function is as follows. Isoform 2 binds to DNA sequences containing the consensus nucleotide core sequence GGA[AT]. Transcriptionally activates SPRR2A and the parotid gland-specific PSP promoters. The protein is ETS-related transcription factor Elf-5 (ELF5) of Homo sapiens (Human).